A 316-amino-acid chain; its full sequence is Methionyl-tRNA formyltransferase (316 aa).

Residue 112–115 (SLLP) participates in (6S)-5,6,7,8-tetrahydrofolate binding.

Belongs to the Fmt family.

It carries out the reaction L-methionyl-tRNA(fMet) + (6R)-10-formyltetrahydrofolate = N-formyl-L-methionyl-tRNA(fMet) + (6S)-5,6,7,8-tetrahydrofolate + H(+). Its function is as follows. Attaches a formyl group to the free amino group of methionyl-tRNA(fMet). The formyl group appears to play a dual role in the initiator identity of N-formylmethionyl-tRNA by promoting its recognition by IF2 and preventing the misappropriation of this tRNA by the elongation apparatus. The polypeptide is Methionyl-tRNA formyltransferase (Flavobacterium psychrophilum (strain ATCC 49511 / DSM 21280 / CIP 103535 / JIP02/86)).